A 130-amino-acid chain; its full sequence is Small ribosomal subunit protein uS11 (130 aa).

It belongs to the universal ribosomal protein uS11 family. As to quaternary structure, part of the 30S ribosomal subunit. Interacts with proteins S7 and S18. Binds to IF-3.

In terms of biological role, located on the platform of the 30S subunit, it bridges several disparate RNA helices of the 16S rRNA. Forms part of the Shine-Dalgarno cleft in the 70S ribosome. This is Small ribosomal subunit protein uS11 from Alteromonas mediterranea (strain DSM 17117 / CIP 110805 / LMG 28347 / Deep ecotype).